The following is a 285-amino-acid chain: Phosphatidylglycerol--prolipoprotein diacylglyceryl transferase (285 aa).

The next 4 helical transmembrane spans lie at I26–V46, F71–W91, W107–F127, and I133–V153. R154 is a binding site for a 1,2-diacyl-sn-glycero-3-phospho-(1'-sn-glycerol). Helical transmembrane passes span L194–F214, G218–F238, and G256–F276.

It belongs to the Lgt family.

The protein localises to the cell inner membrane. It carries out the reaction L-cysteinyl-[prolipoprotein] + a 1,2-diacyl-sn-glycero-3-phospho-(1'-sn-glycerol) = an S-1,2-diacyl-sn-glyceryl-L-cysteinyl-[prolipoprotein] + sn-glycerol 1-phosphate + H(+). The protein operates within protein modification; lipoprotein biosynthesis (diacylglyceryl transfer). Functionally, catalyzes the transfer of the diacylglyceryl group from phosphatidylglycerol to the sulfhydryl group of the N-terminal cysteine of a prolipoprotein, the first step in the formation of mature lipoproteins. This chain is Phosphatidylglycerol--prolipoprotein diacylglyceryl transferase, found in Bartonella bacilliformis (strain ATCC 35685 / KC583 / Herrer 020/F12,63).